We begin with the raw amino-acid sequence, 408 residues long: Aminomethyltransferase, mitochondrial (408 aa).

The transit peptide at Met1 to Phe30 directs the protein to the mitochondrion. 3 residues coordinate substrate: Glu235, Arg266, and Tyr404.

Belongs to the GcvT family. As to quaternary structure, the glycine cleavage system is composed of four proteins: P, T, L and H.

It localises to the mitochondrion. The catalysed reaction is N(6)-[(R)-S(8)-aminomethyldihydrolipoyl]-L-lysyl-[protein] + (6S)-5,6,7,8-tetrahydrofolate = N(6)-[(R)-dihydrolipoyl]-L-lysyl-[protein] + (6R)-5,10-methylene-5,6,7,8-tetrahydrofolate + NH4(+). In terms of biological role, the glycine cleavage system catalyzes the degradation of glycine. The protein is Aminomethyltransferase, mitochondrial (GDCST) of Mesembryanthemum crystallinum (Common ice plant).